Consider the following 245-residue polypeptide: 1-(5-phosphoribosyl)-5-[(5-phosphoribosylamino)methylideneamino] imidazole-4-carboxamide isomerase (245 aa).

The active-site Proton acceptor is Asp7. Asp129 serves as the catalytic Proton donor.

Belongs to the HisA/HisF family.

It is found in the cytoplasm. It carries out the reaction 1-(5-phospho-beta-D-ribosyl)-5-[(5-phospho-beta-D-ribosylamino)methylideneamino]imidazole-4-carboxamide = 5-[(5-phospho-1-deoxy-D-ribulos-1-ylimino)methylamino]-1-(5-phospho-beta-D-ribosyl)imidazole-4-carboxamide. It participates in amino-acid biosynthesis; L-histidine biosynthesis; L-histidine from 5-phospho-alpha-D-ribose 1-diphosphate: step 4/9. In Shigella flexneri serotype 5b (strain 8401), this protein is 1-(5-phosphoribosyl)-5-[(5-phosphoribosylamino)methylideneamino] imidazole-4-carboxamide isomerase.